We begin with the raw amino-acid sequence, 240 residues long: Ribonuclease PH (240 aa).

Residues arginine 87 and 125-127 each bind phosphate; that span reads GTR.

It belongs to the RNase PH family. Homohexameric ring arranged as a trimer of dimers.

The catalysed reaction is tRNA(n+1) + phosphate = tRNA(n) + a ribonucleoside 5'-diphosphate. Phosphorolytic 3'-5' exoribonuclease that plays an important role in tRNA 3'-end maturation. Removes nucleotide residues following the 3'-CCA terminus of tRNAs; can also add nucleotides to the ends of RNA molecules by using nucleoside diphosphates as substrates, but this may not be physiologically important. Probably plays a role in initiation of 16S rRNA degradation (leading to ribosome degradation) during starvation. The sequence is that of Ribonuclease PH from Ruminiclostridium cellulolyticum (strain ATCC 35319 / DSM 5812 / JCM 6584 / H10) (Clostridium cellulolyticum).